The following is a 387-amino-acid chain: 3-ketoacyl-CoA thiolase (387 aa).

Residue cysteine 91 is the Acyl-thioester intermediate of the active site. Residues histidine 343 and cysteine 373 each act as proton acceptor in the active site.

Belongs to the thiolase-like superfamily. Thiolase family. As to quaternary structure, heterotetramer of two alpha chains (FadB) and two beta chains (FadA).

The protein resides in the cytoplasm. The catalysed reaction is an acyl-CoA + acetyl-CoA = a 3-oxoacyl-CoA + CoA. Its pathway is lipid metabolism; fatty acid beta-oxidation. In terms of biological role, catalyzes the final step of fatty acid oxidation in which acetyl-CoA is released and the CoA ester of a fatty acid two carbons shorter is formed. This is 3-ketoacyl-CoA thiolase from Photobacterium profundum (strain SS9).